Here is a 146-residue protein sequence, read N- to C-terminus: Nitric oxide reductase subunit C (146 aa).

A helical; Signal-anchor membrane pass occupies residues 13-29 (IYFGGSVFFFLVFLGLT). The heme c site is built by Cys61, Cys64, and His65.

Heterodimer of cytochromes b (large subunit) and c (small subunit).

The protein localises to the cell membrane. Its function is as follows. Component of the anaerobic respiratory chain that transforms nitrate to dinitrogen (denitrification). This is Nitric oxide reductase subunit C (norC) from Stutzerimonas stutzeri (Pseudomonas stutzeri).